We begin with the raw amino-acid sequence, 514 residues long: 1-pyrroline-5-carboxylate dehydrogenase (514 aa).

Catalysis depends on residues E286 and C320.

This sequence belongs to the aldehyde dehydrogenase family. RocA subfamily.

The enzyme catalyses L-glutamate 5-semialdehyde + NAD(+) + H2O = L-glutamate + NADH + 2 H(+). It participates in amino-acid degradation; L-proline degradation into L-glutamate; L-glutamate from L-proline: step 2/2. This is 1-pyrroline-5-carboxylate dehydrogenase from Staphylococcus aureus (strain MRSA252).